We begin with the raw amino-acid sequence, 453 residues long: Bifunctional protein GlmU (453 aa).

The pyrophosphorylase stretch occupies residues 1-231 (MERTCLAVIL…EIEMTGCNNR (231 aa)). Residues 10 to 13 (LAAG), Lys24, Gln77, 82 to 83 (GT), 105 to 107 (YGD), Gly143, Glu157, Asn172, and Asn229 each bind UDP-N-acetyl-alpha-D-glucosamine. Position 107 (Asp107) interacts with Mg(2+). Position 229 (Asn229) interacts with Mg(2+). The interval 232 to 252 (AELAVIERFWQERRRREMMLA) is linker. The segment at 253–453 (GVTMIAPETV…AIKAAKKAEA (201 aa)) is N-acetyltransferase. The UDP-N-acetyl-alpha-D-glucosamine site is built by Arg318 and Lys336. His348 (proton acceptor) is an active-site residue. Positions 351 and 362 each coordinate UDP-N-acetyl-alpha-D-glucosamine. Acetyl-CoA contacts are provided by residues Ala365, 371–372 (NY), Ser390, Ser408, and Arg425.

The protein in the N-terminal section; belongs to the N-acetylglucosamine-1-phosphate uridyltransferase family. It in the C-terminal section; belongs to the transferase hexapeptide repeat family. As to quaternary structure, homotrimer. Mg(2+) serves as cofactor.

The protein localises to the cytoplasm. It catalyses the reaction alpha-D-glucosamine 1-phosphate + acetyl-CoA = N-acetyl-alpha-D-glucosamine 1-phosphate + CoA + H(+). It carries out the reaction N-acetyl-alpha-D-glucosamine 1-phosphate + UTP + H(+) = UDP-N-acetyl-alpha-D-glucosamine + diphosphate. It functions in the pathway nucleotide-sugar biosynthesis; UDP-N-acetyl-alpha-D-glucosamine biosynthesis; N-acetyl-alpha-D-glucosamine 1-phosphate from alpha-D-glucosamine 6-phosphate (route II): step 2/2. Its pathway is nucleotide-sugar biosynthesis; UDP-N-acetyl-alpha-D-glucosamine biosynthesis; UDP-N-acetyl-alpha-D-glucosamine from N-acetyl-alpha-D-glucosamine 1-phosphate: step 1/1. It participates in bacterial outer membrane biogenesis; LPS lipid A biosynthesis. Catalyzes the last two sequential reactions in the de novo biosynthetic pathway for UDP-N-acetylglucosamine (UDP-GlcNAc). The C-terminal domain catalyzes the transfer of acetyl group from acetyl coenzyme A to glucosamine-1-phosphate (GlcN-1-P) to produce N-acetylglucosamine-1-phosphate (GlcNAc-1-P), which is converted into UDP-GlcNAc by the transfer of uridine 5-monophosphate (from uridine 5-triphosphate), a reaction catalyzed by the N-terminal domain. This chain is Bifunctional protein GlmU, found in Rhizobium etli (strain ATCC 51251 / DSM 11541 / JCM 21823 / NBRC 15573 / CFN 42).